Here is a 670-residue protein sequence, read N- to C-terminus: Probable E3 ubiquitin ligase complex SCF subunit sconB (670 aa).

The interval 1–38 is disordered; that stretch reads MSSPPPFTSIFGGPAESAEEIDADADNSQLKPHNRSNV. Positions 27–38 are enriched in polar residues; that stretch reads NSQLKPHNRSNV. One can recognise an F-box domain in the interval 163-209; it reads IDFIAALPPEISFKILCYLDTTSLCKAAQVSRRWRALADDDVVWHRM. The segment at 249–287 is disordered; sequence VNGTSPKATPALPEDASPVADSSGTGKRKPEPSEEETAV. WD repeat units follow at residues 339–376, 379–418, 420–456, 458–499, 553–596, 599–636, and 639–670; these read GHTN…EIRT, GHES…STYT, HRGG…TCLL, GHTD…RTFH, ISQS…CLRT, GHLE…CERT, and GHSG…SFQS.

It belongs to the WD repeat MET30/SCONB/SCON-2 family. In terms of assembly, component of the SCF(sconB) E3 ubiquitin ligase complex.

Its pathway is protein modification; protein ubiquitination. Component of the SCF(sconB) E3 ubiquitin ligase complex involved in the regulation of sulfur metabolite repression, probably by mediating the inactivation or degradation of the metR transcription factor. The sequence is that of Probable E3 ubiquitin ligase complex SCF subunit sconB (sconB) from Aspergillus niger (strain ATCC MYA-4892 / CBS 513.88 / FGSC A1513).